The sequence spans 471 residues: ATP synthase subunit beta (471 aa).

Gly154–Thr161 contacts ATP.

This sequence belongs to the ATPase alpha/beta chains family. As to quaternary structure, F-type ATPases have 2 components, CF(1) - the catalytic core - and CF(0) - the membrane proton channel. CF(1) has five subunits: alpha(3), beta(3), gamma(1), delta(1), epsilon(1). CF(0) has three main subunits: a(1), b(2) and c(9-12). The alpha and beta chains form an alternating ring which encloses part of the gamma chain. CF(1) is attached to CF(0) by a central stalk formed by the gamma and epsilon chains, while a peripheral stalk is formed by the delta and b chains.

The protein resides in the cell membrane. It carries out the reaction ATP + H2O + 4 H(+)(in) = ADP + phosphate + 5 H(+)(out). Its function is as follows. Produces ATP from ADP in the presence of a proton gradient across the membrane. The catalytic sites are hosted primarily by the beta subunits. This is ATP synthase subunit beta from Mesomycoplasma hyopneumoniae (strain 7448) (Mycoplasma hyopneumoniae).